Reading from the N-terminus, the 377-residue chain is MSGAVPFGAGAVRTGAITGDEAIRARFGLGWPGFRLDVDLALPGRGVIALFGHSGSGKTTLLRCLAGLERAADGYLAVRGELWQDEAQRLFVPTHRRPLGYVFQEASLFAHLTVRRNLEFGLKRVPAASRRIPLDQAIALLGIEPLLDRMSGRLSGGERQRVAIARALATSPRLLLMDEPLAALDVKRKQEILPYLERLHAELDIPVVYVSHAPEEVARLADHVVLLADGRALAAGPIGEVMARLDLPFAHDEDAFVVIDARVAAHDEAYALTRLEFAGLPLWITGLDMPLASRVRARVLARDVSLALTERHDSSILNVLPARVVSLDEADPGRTLVRLDVAGTALLARITRRSAAQLGIVPGRDVYAQVKGVALLR.

The ABC transporter domain maps to 17 to 254 (ITGDEAIRAR…LDLPFAHDED (238 aa)). 52 to 59 (GHSGSGKT) is a binding site for ATP. The Mop domain occupies 313–377 (DSSILNVLPA…AQVKGVALLR (65 aa)).

Belongs to the ABC transporter superfamily. Molybdate importer (TC 3.A.1.8) family. As to quaternary structure, the complex is composed of two ATP-binding proteins (ModC), two transmembrane proteins (ModB) and a solute-binding protein (ModA).

It is found in the cell inner membrane. The catalysed reaction is molybdate(out) + ATP + H2O = molybdate(in) + ADP + phosphate + H(+). In terms of biological role, part of the ABC transporter complex ModABC involved in molybdenum import. Responsible for energy coupling to the transport system. This is Molybdenum import ATP-binding protein ModC from Aromatoleum aromaticum (strain DSM 19018 / LMG 30748 / EbN1) (Azoarcus sp. (strain EbN1)).